A 365-amino-acid polypeptide reads, in one-letter code: Bifunctional chorismate mutase/prephenate dehydratase (365 aa).

In terms of domain architecture, Chorismate mutase spans 1-96; that stretch reads MADQDQLKAL…SCLALEQPLK (96 aa). Arg11, Arg28, Lys39, and Glu57 together coordinate substrate. Residues 97–272 enclose the Prephenate dehydratase domain; the sequence is VAYLGPEGTF…NSTRFLIIGN (176 aa). Residues 284–361 form the ACT domain; the sequence is SIIVSMRNKP…VALKVLGSYP (78 aa).

Its subcellular location is the cytoplasm. The enzyme catalyses chorismate = prephenate. It carries out the reaction prephenate + H(+) = 3-phenylpyruvate + CO2 + H2O. The protein operates within amino-acid biosynthesis; L-phenylalanine biosynthesis; phenylpyruvate from prephenate: step 1/1. It functions in the pathway metabolic intermediate biosynthesis; prephenate biosynthesis; prephenate from chorismate: step 1/1. Catalyzes the Claisen rearrangement of chorismate to prephenate and the decarboxylation/dehydration of prephenate to phenylpyruvate. The protein is Bifunctional chorismate mutase/prephenate dehydratase (pheA) of Pseudomonas aeruginosa (strain ATCC 15692 / DSM 22644 / CIP 104116 / JCM 14847 / LMG 12228 / 1C / PRS 101 / PAO1).